The chain runs to 478 residues: Calcium/calmodulin-dependent protein kinase type II subunit alpha (478 aa).

At Tyr-13 the chain carries Phosphotyrosine. A Protein kinase domain is found at 13-271 (YQLFEELGKG…AAEALKHPWI (259 aa)). Residues 19–27 (LGKGAFSVV) and Lys-42 each bind ATP. The active-site Proton acceptor is the Asp-135. Ser-257 carries the phosphoserine modification. Thr-286 carries the phosphothreonine; by autocatalysis modification. The calmodulin-binding stretch occupies residues 290–300 (LKKFNARRKLK). The interaction with BAALC stretch occupies residues 310–320 (TRNFSGGKSGG). A disordered region spans residues 314–341 (SGGKSGGNKKSDGVKESSESTNTTIEDE). Residues 322–331 (KKSDGVKESS) are compositionally biased toward basic and acidic residues. Phosphoserine is present on residues Ser-330, Ser-331, and Ser-333. 2 positions are modified to phosphothreonine: Thr-336 and Thr-337. Ser-404 is modified (phosphoserine).

Belongs to the protein kinase superfamily. CAMK Ser/Thr protein kinase family. CaMK subfamily. In terms of assembly, there are 4 genes encoding calcium/calmodulin-dependent protein kinase type II chains: CAMK2A, CAMK2B, CAMK2G and CAMK2D. The corresponding proteins assemble into homo- or heteromultimeric holoenzymes composed of 12 subunits with two hexameric rings stacked one on top of the other. Interacts with BAALC. Interacts with MPDZ. Interacts with SYN1. Interacts with CAMK2N2. Interacts with SYNGAP1. Interacts with SYNPO2. Interacts with SHANK3. Interacts with GRIN2B. Interacts with CACNB2. Interacts with LRRC7. Interacts with GRM5. Interacts with DAGLA (via C-terminal); this interaction is enhanced by autophosphorylation of CAMK2A at Thr-286. Interacts with CAMK2N1; this interaction requires CAMK2A activation by Ca(2+). Requires Mg(2+) as cofactor. Post-translationally, autophosphorylation of Thr-286 following activation by Ca(2+)/calmodulin. Phosphorylation of Thr-286 locks the kinase into an activated state. Palmitoylated. Probably palmitoylated by ZDHHC3 and ZDHHC7.

The protein localises to the synapse. It localises to the postsynaptic density. It is found in the cell projection. The protein resides in the dendritic spine. Its subcellular location is the dendrite. The enzyme catalyses L-seryl-[protein] + ATP = O-phospho-L-seryl-[protein] + ADP + H(+). It carries out the reaction L-threonyl-[protein] + ATP = O-phospho-L-threonyl-[protein] + ADP + H(+). Its activity is regulated as follows. Activated by Ca(2+)/calmodulin. Binding of calmodulin results in conformational change that relieves intrasteric autoinhibition and allows autophosphorylation of Thr-286 which turns the kinase in a constitutively active form and confers to the kinase a Ca(2+)-independent activity. Its function is as follows. Calcium/calmodulin-dependent protein kinase that functions autonomously after Ca(2+)/calmodulin-binding and autophosphorylation, and is involved in various processes, such as synaptic plasticity, neurotransmitter release and long-term potentiation. Member of the NMDAR signaling complex in excitatory synapses, it regulates NMDAR-dependent potentiation of the AMPAR and therefore excitatory synaptic transmission. Regulates dendritic spine development. Also regulates the migration of developing neurons. Phosphorylates the transcription factor FOXO3 to activate its transcriptional activity. Phosphorylates the transcription factor ETS1 in response to calcium signaling, thereby decreasing ETS1 affinity for DNA. In response to interferon-gamma (IFN-gamma) stimulation, catalyzes phosphorylation of STAT1, stimulating the JAK-STAT signaling pathway. In response to interferon-beta (IFN-beta) stimulation, stimulates the JAK-STAT signaling pathway. Acts as a negative regulator of 2-arachidonoylglycerol (2-AG)-mediated synaptic signaling via modulation of DAGLA activity. In Pongo abelii (Sumatran orangutan), this protein is Calcium/calmodulin-dependent protein kinase type II subunit alpha (CAMK2A).